The primary structure comprises 202 residues: UPF0126 membrane protein YvgT (202 aa).

6 helical membrane passes run 3-23 (WELL…IVAM), 26-46 (EYDI…GGAI), 63-83 (AYFQ…KLLL), 90-110 (GNLS…LYAV), 113-133 (GHPL…GGII), and 160-180 (IVGL…FVLV).

It belongs to the UPF0126 family.

The protein localises to the cell membrane. This is UPF0126 membrane protein YvgT (yvgT) from Bacillus subtilis (strain 168).